We begin with the raw amino-acid sequence, 436 residues long: AMSH-like protease (436 aa).

M1 bears the N-acetylmethionine mark. Phosphoserine is present on residues S25 and S242. One can recognise an MPN domain in the interval 269–397 (VVLSRDLCHK…IFRLTNAGML (129 aa)). Zn(2+) is bound by residues H347, H349, D360, H362, C402, H408, and H410. A JAMM motif motif is present at residues 347–360 (HTHPTQTAFLSSVD).

The protein belongs to the peptidase M67C family. Zn(2+) is required as a cofactor. Ubiquitously expressed. Isoform 1 is widely expressed while isoform 2 is testis-specific.

Zinc metalloprotease that specifically cleaves 'Lys-63'-linked polyubiquitin chains. Acts as a positive regulator of the TORC1 signaling pathway by mediating 'Lys-63'-linked deubiquitination of SESN2, thereby inhibiting SESN2-interaction with the GATOR2 complex. Does not cleave 'Lys-48'-linked polyubiquitin chains. The protein is AMSH-like protease (Stambpl1) of Mus musculus (Mouse).